Consider the following 193-residue polypeptide: Peptidyl-tRNA hydrolase (193 aa).

Residue tyrosine 16 coordinates tRNA. Histidine 21 (proton acceptor) is an active-site residue. Positions 67, 69, and 115 each coordinate tRNA.

It belongs to the PTH family. Monomer.

It is found in the cytoplasm. It carries out the reaction an N-acyl-L-alpha-aminoacyl-tRNA + H2O = an N-acyl-L-amino acid + a tRNA + H(+). Its function is as follows. Hydrolyzes ribosome-free peptidyl-tRNAs (with 1 or more amino acids incorporated), which drop off the ribosome during protein synthesis, or as a result of ribosome stalling. Catalyzes the release of premature peptidyl moieties from peptidyl-tRNA molecules trapped in stalled 50S ribosomal subunits, and thus maintains levels of free tRNAs and 50S ribosomes. The sequence is that of Peptidyl-tRNA hydrolase from Psychrobacter cryohalolentis (strain ATCC BAA-1226 / DSM 17306 / VKM B-2378 / K5).